Here is a 345-residue protein sequence, read N- to C-terminus: Annexin A9 (345 aa).

Annexin repeat units follow at residues 41–112, 113–184, 197–266, and 270–341; these read FSAD…ALLQ, PAAH…ALAK, NLAA…NLAS, and NTPL…ALCR.

This sequence belongs to the annexin family. Homodimer.

May act as a low affinity receptor for acetylcholine. The polypeptide is Annexin A9 (ANXA9) (Bos taurus (Bovine)).